A 179-amino-acid polypeptide reads, in one-letter code: Large ribosomal subunit protein uL6 (179 aa).

It belongs to the universal ribosomal protein uL6 family. Part of the 50S ribosomal subunit.

This protein binds to the 23S rRNA, and is important in its secondary structure. It is located near the subunit interface in the base of the L7/L12 stalk, and near the tRNA binding site of the peptidyltransferase center. The chain is Large ribosomal subunit protein uL6 from Desulfovibrio desulfuricans (strain ATCC 27774 / DSM 6949 / MB).